A 617-amino-acid chain; its full sequence is MKQSKMPIPTLREMPSDAQVISHALMLRAGYVRQVSAGVYSYLPLANRVIEKAKNIMRQEFEKIGAVEMLAPTLLSAELWRESGRYETYGEDLYKLKNREKSDFILGPTHEETFTAIVRDSVKSYKQLPLNLYQIQPKYRDEKRPRNGLLRTREFIMKDAYSFHANYDSLDSVYDEYKAAYERIFTRSGLDFKAIIGDGGAMGGKDSQEFMAITSARTDLDRWVVLDKSVASFDEIPAEVQEEIKAELLKWIVSGEDTIAYSSESSYAANLEMATNEYKPSNRVVAEEEVTRVATPDVKSIDEVAAFLNVPEEQTIKTLFYIADGELVAALLVGNDQLNEVKLKNHLGADFFDVASEEEVANVVQAGFGSLGPVGLPENIKIIADRKVQDVRNAVVGANEDGYHLTGVNPGRDFTAEYVDIREVREGEISPDGQGVLNFARGIEIGHIFKLGTRYSASMGADVLDENGRAVPIIMGCYGIGVSRLLSAVMEQHARLFVNKTPKGEYRYAWGINFPKELAPFDVHLITVNVKDEEAQALTEKLEASLMGAGYEVLTDDRNERVGVKFSDSDLIGLPIRITVGKKAADGIVEVKIKATGDTIEVHADNVLETLEILSKK.

Belongs to the class-II aminoacyl-tRNA synthetase family. ProS type 1 subfamily. As to quaternary structure, homodimer.

It localises to the cytoplasm. The catalysed reaction is tRNA(Pro) + L-proline + ATP = L-prolyl-tRNA(Pro) + AMP + diphosphate. Its function is as follows. Catalyzes the attachment of proline to tRNA(Pro) in a two-step reaction: proline is first activated by ATP to form Pro-AMP and then transferred to the acceptor end of tRNA(Pro). As ProRS can inadvertently accommodate and process non-cognate amino acids such as alanine and cysteine, to avoid such errors it has two additional distinct editing activities against alanine. One activity is designated as 'pretransfer' editing and involves the tRNA(Pro)-independent hydrolysis of activated Ala-AMP. The other activity is designated 'posttransfer' editing and involves deacylation of mischarged Ala-tRNA(Pro). The misacylated Cys-tRNA(Pro) is not edited by ProRS. The chain is Proline--tRNA ligase from Streptococcus pneumoniae (strain ATCC 700669 / Spain 23F-1).